The primary structure comprises 209 residues: Probable glutathione peroxidase 8-A (209 aa).

A helical membrane pass occupies residues 18–40; the sequence is VSVVFLSMLLCTGILCVLQLGFL. Cysteine 79 is an active-site residue.

This sequence belongs to the glutathione peroxidase family.

Its subcellular location is the membrane. It carries out the reaction 2 glutathione + H2O2 = glutathione disulfide + 2 H2O. This chain is Probable glutathione peroxidase 8-A (gpx8-a), found in Xenopus laevis (African clawed frog).